The sequence spans 226 residues: Apoptosis regulator OPG045 (226 aa).

It belongs to the orthopoxvirus OPG045 family. As to quaternary structure, homodimer. Interacts with host pro-apoptotic protein BCL2L11 (via BH3 domain). Interacts with host NLRP1. Interacts with host BAK.

The protein resides in the host mitochondrion outer membrane. The protein localises to the host cytoplasm. Plays a role in evading host innate immune response by inhibiting host inflammasome activation. Interacts with and inhibits NLR-mediated interleukin-1 beta/IL1B production in infected cells. At the host mitochondria outer membrane, interacts with the BH3 domain of host BAK and prevents BAK from binding active BAX. In turn, host apoptosis is inhibited. The sequence is that of Apoptosis regulator OPG045 (OPG045) from Homo sapiens (Human).